The sequence spans 431 residues: Fumarylacetoacetase (431 aa).

D133 contacts Ca(2+). Residue Y135 participates in substrate binding. The active-site Proton acceptor is H140. R149 is a binding site for substrate. Ca(2+) is bound by residues E209, E211, and D243. D243 contacts Mg(2+). Residues Q250 and Y254 each contribute to the substrate site. 2 residues coordinate Mg(2+): K263 and T267. T362 is a binding site for substrate.

The protein belongs to the FAH family. The cofactor is Ca(2+). It depends on Mg(2+) as a cofactor.

It catalyses the reaction 4-fumarylacetoacetate + H2O = acetoacetate + fumarate + H(+). It functions in the pathway amino-acid degradation; L-phenylalanine degradation; acetoacetate and fumarate from L-phenylalanine: step 6/6. Functionally, use of phenylalanine and phenylacetate as a carbon source. The chain is Fumarylacetoacetase (fahA) from Emericella nidulans (strain FGSC A4 / ATCC 38163 / CBS 112.46 / NRRL 194 / M139) (Aspergillus nidulans).